The sequence spans 138 residues: uncharacterized protein (138 aa).

This is an uncharacterized protein from Methanocaldococcus jannaschii (strain ATCC 43067 / DSM 2661 / JAL-1 / JCM 10045 / NBRC 100440) (Methanococcus jannaschii).